Here is a 249-residue protein sequence, read N- to C-terminus: Nodulation protein H (249 aa).

Functionally, required for the formation of sulfated nod factor. Proposed to transfer activated sulfate (PAPS) to a N-acetylglucosamine of the nod factor. The chain is Nodulation protein H (nodH) from Rhizobium tropici.